Reading from the N-terminus, the 360-residue chain is Probable neutral protease 2 homolog A (360 aa).

Residues 1-17 form the signal peptide; it reads MQFTALLAALGAPLALA. A propeptide spanning residues 18–183 is cleaved from the precursor; it reads ASIPAAAHNH…DDSTGVIDKR (166 aa). Disulfide bonds link Cys191-Cys262, Cys269-Cys287, and Cys300-Cys360. N-linked (GlcNAc...) asparagine glycosylation is present at Asn205. His311 contacts Zn(2+). Residue Glu312 is part of the active site. Positions 315 and 326 each coordinate Zn(2+).

This sequence belongs to the peptidase M35 family. It depends on Zn(2+) as a cofactor.

It localises to the secreted. It catalyses the reaction Preferential cleavage of bonds with hydrophobic residues in P1'. Also 3-Asn-|-Gln-4 and 8-Gly-|-Ser-9 bonds in insulin B chain.. In terms of biological role, probable secreted metalloprotease that shows high activities on basic nuclear substrates such as histone and protamine. May be involved in virulence. The protein is Probable neutral protease 2 homolog A (NpII-A) of Trichophyton rubrum (Athlete's foot fungus).